Reading from the N-terminus, the 262-residue chain is Nodulation protein J (262 aa).

An ABC transmembrane type-2 domain is found at 33-259 (ASLLGHLAEP…FLSTALLRRR (227 aa)). Transmembrane regions (helical) follow at residues 35 to 55 (LLGHLAEPLIYLFGLGAGLGV), 60 to 80 (VGGVSYTAFLAAGMVATSAMT), 125 to 145 (AALAGAGIGVVAAALGYTQWL), 148 to 168 (LYALPVIALTGLAFASLGMVV), 177 to 197 (YFIFYQTLVITPILFLSGAVF), and 231 to 251 (VVDVCQHVGALCIYIVIPFFL).

This sequence belongs to the ABC-2 integral membrane protein family. Lipooligosaccharide exporter (TC 3.A.1.102) subfamily. In terms of assembly, the complex is composed of two ATP-binding proteins (NodI) and two transmembrane proteins (NodJ).

The protein resides in the cell inner membrane. In terms of biological role, part of the ABC transporter complex NodIJ involved in the export of the nodulation factors (Nod factors), the bacterial signal molecules that induce symbiosis and subsequent nodulation induction. Nod factors are LCO (lipo-chitin oligosaccharide), a modified beta-1,4-linked N-acetylglucosamine oligosaccharide. This subunit encodes the transporter. This is Nodulation protein J (nodJ) from Rhizobium leguminosarum bv. trifolii.